An 868-amino-acid chain; its full sequence is Leucine--tRNA ligase (868 aa).

The 'HIGH' region signature appears at 42–52; sequence PYPSGKLHMGH. Positions 627 to 631 match the 'KMSKS' region motif; it reads KMSKS. Lys630 is an ATP binding site.

Belongs to the class-I aminoacyl-tRNA synthetase family.

The protein localises to the cytoplasm. It carries out the reaction tRNA(Leu) + L-leucine + ATP = L-leucyl-tRNA(Leu) + AMP + diphosphate. In Pseudomonas putida (strain W619), this protein is Leucine--tRNA ligase.